The sequence spans 944 residues: 2-oxoglutarate dehydrogenase E1 component (944 aa).

The tract at residues 914–944 is disordered; sequence RRRRSSPAEGDPTVHKKEQERIVSDSLTRKN. A compositionally biased stretch (basic and acidic residues) spans 925 to 936; the sequence is PTVHKKEQERIV.

It belongs to the alpha-ketoglutarate dehydrogenase family. As to quaternary structure, homodimer. Part of the 2-oxoglutarate dehydrogenase (OGDH) complex composed of E1 (2-oxoglutarate dehydrogenase), E2 (dihydrolipoamide succinyltransferase) and E3 (dihydrolipoamide dehydrogenase); the complex contains multiple copies of the three enzymatic components (E1, E2 and E3). It depends on thiamine diphosphate as a cofactor.

The catalysed reaction is N(6)-[(R)-lipoyl]-L-lysyl-[protein] + 2-oxoglutarate + H(+) = N(6)-[(R)-S(8)-succinyldihydrolipoyl]-L-lysyl-[protein] + CO2. Functionally, E1 component of the 2-oxoglutarate dehydrogenase (OGDH) complex which catalyzes the decarboxylation of 2-oxoglutarate, the first step in the conversion of 2-oxoglutarate to succinyl-CoA and CO(2). The chain is 2-oxoglutarate dehydrogenase E1 component from Bacillus licheniformis (strain ATCC 14580 / DSM 13 / JCM 2505 / CCUG 7422 / NBRC 12200 / NCIMB 9375 / NCTC 10341 / NRRL NRS-1264 / Gibson 46).